Reading from the N-terminus, the 406-residue chain is GTPase Obg (406 aa).

Positions 1–159 (MKFVDEVSIF…RDLKLELKVL (159 aa)) constitute an Obg domain. The interval 126–149 (GNTRFKSSTNRAPRQTTPGKPGES) is disordered. Residues 129–143 (RFKSSTNRAPRQTTP) are compositionally biased toward polar residues. An OBG-type G domain is found at 160–333 (ADVGLLGLPN…ICRDIMHYLE (174 aa)). GTP is bound by residues 166 to 173 (GLPNAGKS), 191 to 195 (FTTLV), 213 to 216 (DIPG), 283 to 286 (NKMD), and 314 to 316 (SAI). Mg(2+)-binding residues include Ser-173 and Thr-193. The interval 376-406 (SGVRSVDDIDEDDDFFDDEDDDGPEIIYVRD) is disordered. The segment covering 383–399 (DIDEDDDFFDDEDDDGP) has biased composition (acidic residues).

Belongs to the TRAFAC class OBG-HflX-like GTPase superfamily. OBG GTPase family. In terms of assembly, monomer. Mg(2+) serves as cofactor.

It is found in the cytoplasm. In terms of biological role, an essential GTPase which binds GTP, GDP and possibly (p)ppGpp with moderate affinity, with high nucleotide exchange rates and a fairly low GTP hydrolysis rate. Plays a role in control of the cell cycle, stress response, ribosome biogenesis and in those bacteria that undergo differentiation, in morphogenesis control. The polypeptide is GTPase Obg (Ectopseudomonas mendocina (strain ymp) (Pseudomonas mendocina)).